A 382-amino-acid chain; its full sequence is UDP-N-acetylglucosamine--N-acetylmuramyl-(pentapeptide) pyrophosphoryl-undecaprenol N-acetylglucosamine transferase (382 aa).

Residues 17–19 (TAG), Asn137, Arg179, Ser213, and Gln308 contribute to the UDP-N-acetyl-alpha-D-glucosamine site.

This sequence belongs to the glycosyltransferase 28 family. MurG subfamily.

It is found in the cell membrane. It carries out the reaction di-trans,octa-cis-undecaprenyl diphospho-N-acetyl-alpha-D-muramoyl-L-alanyl-D-glutamyl-meso-2,6-diaminopimeloyl-D-alanyl-D-alanine + UDP-N-acetyl-alpha-D-glucosamine = di-trans,octa-cis-undecaprenyl diphospho-[N-acetyl-alpha-D-glucosaminyl-(1-&gt;4)]-N-acetyl-alpha-D-muramoyl-L-alanyl-D-glutamyl-meso-2,6-diaminopimeloyl-D-alanyl-D-alanine + UDP + H(+). It participates in cell wall biogenesis; peptidoglycan biosynthesis. In terms of biological role, cell wall formation. Catalyzes the transfer of a GlcNAc subunit on undecaprenyl-pyrophosphoryl-MurNAc-pentapeptide (lipid intermediate I) to form undecaprenyl-pyrophosphoryl-MurNAc-(pentapeptide)GlcNAc (lipid intermediate II). The chain is UDP-N-acetylglucosamine--N-acetylmuramyl-(pentapeptide) pyrophosphoryl-undecaprenol N-acetylglucosamine transferase from Rhodococcus opacus (strain B4).